Consider the following 304-residue polypeptide: Killer cell immunoglobulin-like receptor 2DS2 (304 aa).

A signal peptide spans 1–21; sequence MSLMVVSMACVGFFLLQGAWP. Residues 22-245 are Extracellular-facing; the sequence is HEGVHRKPSL…SKTGNPRHLH (224 aa). 2 Ig-like C2-type domains span residues 42–107 and 142–205; these read EETV…VTHS and GESV…FRDS. 2 cysteine pairs are disulfide-bonded: Cys-49-Cys-100 and Cys-149-Cys-198. N-linked (GlcNAc...) asparagine glycans are attached at residues Asn-84, Asn-178, and Asn-211. The tract at residues 220–239 is disordered; sequence VTGNPSNSWPSPTEPSSKTG. A helical transmembrane segment spans residues 246-265; it reads VLIGTSVVKIPFTILLFFLL. Residues 266-304 are Cytoplasmic-facing; it reads HRWCSNKKNAAVMDQEPAGNRTVNSEDSDEQDHQEVSYA. A disordered region spans residues 280-304; sequence QEPAGNRTVNSEDSDEQDHQEVSYA.

This sequence belongs to the immunoglobulin superfamily.

Its subcellular location is the cell membrane. Its function is as follows. Receptor on natural killer (NK) cells for HLA-C alleles. Does not inhibit the activity of NK cells. In Homo sapiens (Human), this protein is Killer cell immunoglobulin-like receptor 2DS2.